We begin with the raw amino-acid sequence, 88 residues long: Phosphocarrier protein HPr (88 aa).

The HPr domain occupies 1–88 (MEQASFVVID…EVLKKEGLAE (88 aa)). The active-site Pros-phosphohistidine intermediate is histidine 15. Serine 46 carries the phosphoserine; by HPrK/P modification.

The protein belongs to the HPr family.

The protein localises to the cytoplasm. Its activity is regulated as follows. Phosphorylation on Ser-46 inhibits the phosphoryl transfer from enzyme I to HPr. Its function is as follows. General (non sugar-specific) component of the phosphoenolpyruvate-dependent sugar phosphotransferase system (sugar PTS). This major carbohydrate active-transport system catalyzes the phosphorylation of incoming sugar substrates concomitantly with their translocation across the cell membrane. The phosphoryl group from phosphoenolpyruvate (PEP) is transferred to the phosphoryl carrier protein HPr by enzyme I. Phospho-HPr then transfers it to the PTS EIIA domain. P-Ser-HPr interacts with the catabolite control protein A (CcpA), forming a complex that binds to DNA at the catabolite response elements cre, operator sites preceding a large number of catabolite-regulated genes. Thus, P-Ser-HPr is a corepressor in carbon catabolite repression (CCR), a mechanism that allows bacteria to coordinate and optimize the utilization of available carbon sources. P-Ser-HPr also plays a role in inducer exclusion, in which it probably interacts with several non-PTS permeases and inhibits their transport activity. This is Phosphocarrier protein HPr (ptsH) from Listeria monocytogenes serovar 1/2a (strain ATCC BAA-679 / EGD-e).